We begin with the raw amino-acid sequence, 159 residues long: Transcriptional repressor NrdR (159 aa).

The segment at 3–34 (CPFCNAADSKVIDSRLAAEGCQIRRRRECISC) is a zinc-finger region. One can recognise an ATP-cone domain in the interval 49–139 (PRVIKSNGKN…VYQDFQDVEA (91 aa)).

It belongs to the NrdR family. Requires Zn(2+) as cofactor.

Functionally, negatively regulates transcription of bacterial ribonucleotide reductase nrd genes and operons by binding to NrdR-boxes. The sequence is that of Transcriptional repressor NrdR from Acinetobacter baylyi (strain ATCC 33305 / BD413 / ADP1).